Reading from the N-terminus, the 696-residue chain is DNA ligase (696 aa).

NAD(+) is bound by residues 43–47 (DGEFD), 92–93 (SL), and E122. Catalysis depends on K124, which acts as the N6-AMP-lysine intermediate. Residues R145, E185, K301, and K325 each coordinate NAD(+). Zn(2+) contacts are provided by C419, C422, C438, and C444. The BRCT domain maps to 608–696 (SIPRNLEGLS…GPDAVAESGV (89 aa)).

The protein belongs to the NAD-dependent DNA ligase family. LigA subfamily. Requires Mg(2+) as cofactor. Mn(2+) serves as cofactor.

The catalysed reaction is NAD(+) + (deoxyribonucleotide)n-3'-hydroxyl + 5'-phospho-(deoxyribonucleotide)m = (deoxyribonucleotide)n+m + AMP + beta-nicotinamide D-nucleotide.. Functionally, DNA ligase that catalyzes the formation of phosphodiester linkages between 5'-phosphoryl and 3'-hydroxyl groups in double-stranded DNA using NAD as a coenzyme and as the energy source for the reaction. It is essential for DNA replication and repair of damaged DNA. The chain is DNA ligase from Rhodococcus jostii (strain RHA1).